A 383-amino-acid chain; its full sequence is Corticosteroid-binding globulin (383 aa).

N74 and N154 each carry an N-linked (GlcNAc...) asparagine glycan. Q232 contributes to the cortisol binding site. N238 carries N-linked (GlcNAc...) asparagine glycosylation. Q264 serves as a coordination point for cortisol. N308 is a glycosylation site (N-linked (GlcNAc...) asparagine). Residue W371 coordinates cortisol.

It belongs to the serpin family. In terms of tissue distribution, produced and secreted by hepatocytes, but has also been identified in a number of glycocorticoid responsive cells (it is found in maternal lung, spleen, and ovary and fetal kidney).

It is found in the secreted. Major transport protein for glucocorticoids and progestins in the blood of almost all vertebrate species. In Oryctolagus cuniculus (Rabbit), this protein is Corticosteroid-binding globulin (SERPINA6).